Here is a 237-residue protein sequence, read N- to C-terminus: Ribosomal RNA small subunit methyltransferase G (237 aa).

S-adenosyl-L-methionine contacts are provided by residues Gly78, Phe83, 129-130 (AE), and Arg148.

The protein belongs to the methyltransferase superfamily. RNA methyltransferase RsmG family.

It localises to the cytoplasm. Functionally, specifically methylates the N7 position of a guanine in 16S rRNA. The polypeptide is Ribosomal RNA small subunit methyltransferase G (Clostridium kluyveri (strain ATCC 8527 / DSM 555 / NBRC 12016 / NCIMB 10680 / K1)).